The sequence spans 223 residues: Adenylate kinase (223 aa).

ATP is bound at residue 10-15; the sequence is GSGKGT. An NMP region spans residues 30–59; that stretch reads ESGAIFRKHIGGGTELGMKAKEYIDKGELV. AMP contacts are provided by residues Ser-31, Arg-36, 57-59, 84-87, and Gln-91; these read ELV and GFPR. The interval 125–164 is LID; it reads GRRLCENDPNHPNNKFIDAIKPDGDKCRVCGGALSERADD. Arg-126 contacts ATP. AMP-binding residues include Arg-161 and Arg-173. Gly-209 contacts ATP.

It belongs to the adenylate kinase family. In terms of assembly, monomer.

The protein resides in the cytoplasm. It carries out the reaction AMP + ATP = 2 ADP. It participates in purine metabolism; AMP biosynthesis via salvage pathway; AMP from ADP: step 1/1. Catalyzes the reversible transfer of the terminal phosphate group between ATP and AMP. Plays an important role in cellular energy homeostasis and in adenine nucleotide metabolism. In Maridesulfovibrio salexigens (strain ATCC 14822 / DSM 2638 / NCIMB 8403 / VKM B-1763) (Desulfovibrio salexigens), this protein is Adenylate kinase.